Consider the following 261-residue polypeptide: Cytochrome c oxidase subunit 3 (261 aa).

Residues 1-15 lie on the Mitochondrial matrix side of the membrane; it reads MTHQTHAYHMVNPSP. A helical membrane pass occupies residues 16 to 34; it reads WPLTGALSALLLTSGLMMW. At 35 to 40 the chain is on the mitochondrial intermembrane side; that stretch reads FHFNNP. A helical transmembrane segment spans residues 41 to 66; sequence TLLVLGLLTNLISSYQWWRDIVREGT. Topologically, residues 67–72 are mitochondrial matrix; it reads YQGHHT. A helical transmembrane segment spans residues 73–105; that stretch reads KVVQKGLRYGMVLFIISEVFFFLGFFWAFYHSS. The Mitochondrial intermembrane segment spans residues 106–128; sequence LAPTPELGGCWPPTGISPLNPLE. The chain crosses the membrane as a helical span at residues 129-152; that stretch reads VPLLNTSILLASGVSITWSHHSLM. The Mitochondrial matrix segment spans residues 153–155; it reads EGN. The helical transmembrane segment at 156–183 threads the bilayer; the sequence is RKQMIQALMITIALGLYFTALQAMEYYE. The Mitochondrial intermembrane portion of the chain corresponds to 184–190; that stretch reads SSFTISD. The helical transmembrane segment at 191–223 threads the bilayer; that stretch reads GVYGSTFFVATGFHGLHVIIGTTFLITCLLRQL. The Mitochondrial matrix segment spans residues 224–232; the sequence is LYHFTSNHH. The helical transmembrane segment at 233–256 threads the bilayer; sequence FGFEAAAWYWHFVDVVWLFLYVSI. The Mitochondrial intermembrane segment spans residues 257-261; the sequence is YWWGS.

Belongs to the cytochrome c oxidase subunit 3 family. In terms of assembly, component of the cytochrome c oxidase (complex IV, CIV), a multisubunit enzyme composed of 14 subunits. The complex is composed of a catalytic core of 3 subunits MT-CO1, MT-CO2 and MT-CO3, encoded in the mitochondrial DNA, and 11 supernumerary subunits COX4I, COX5A, COX5B, COX6A, COX6B, COX6C, COX7A, COX7B, COX7C, COX8 and NDUFA4, which are encoded in the nuclear genome. The complex exists as a monomer or a dimer and forms supercomplexes (SCs) in the inner mitochondrial membrane with NADH-ubiquinone oxidoreductase (complex I, CI) and ubiquinol-cytochrome c oxidoreductase (cytochrome b-c1 complex, complex III, CIII), resulting in different assemblies (supercomplex SCI(1)III(2)IV(1) and megacomplex MCI(2)III(2)IV(2)).

Its subcellular location is the mitochondrion inner membrane. It carries out the reaction 4 Fe(II)-[cytochrome c] + O2 + 8 H(+)(in) = 4 Fe(III)-[cytochrome c] + 2 H2O + 4 H(+)(out). Component of the cytochrome c oxidase, the last enzyme in the mitochondrial electron transport chain which drives oxidative phosphorylation. The respiratory chain contains 3 multisubunit complexes succinate dehydrogenase (complex II, CII), ubiquinol-cytochrome c oxidoreductase (cytochrome b-c1 complex, complex III, CIII) and cytochrome c oxidase (complex IV, CIV), that cooperate to transfer electrons derived from NADH and succinate to molecular oxygen, creating an electrochemical gradient over the inner membrane that drives transmembrane transport and the ATP synthase. Cytochrome c oxidase is the component of the respiratory chain that catalyzes the reduction of oxygen to water. Electrons originating from reduced cytochrome c in the intermembrane space (IMS) are transferred via the dinuclear copper A center (CU(A)) of subunit 2 and heme A of subunit 1 to the active site in subunit 1, a binuclear center (BNC) formed by heme A3 and copper B (CU(B)). The BNC reduces molecular oxygen to 2 water molecules using 4 electrons from cytochrome c in the IMS and 4 protons from the mitochondrial matrix. The chain is Cytochrome c oxidase subunit 3 (MT-CO3) from Tachyglossus aculeatus aculeatus (Southeast Australian short-beaked echidna).